A 267-amino-acid polypeptide reads, in one-letter code: Ribosyldihydronicotinamide dehydrogenase-like protein traD (267 aa).

FAD is bound by residues His-9, 15-16 (LN), and 100-103 (LWWF). 122–124 (GHG) serves as a coordination point for substrate. FAD is bound by residues 152–155 (TLGG) and Tyr-160.

It belongs to the NAD(P)H dehydrogenase (quinone) family. As to quaternary structure, homodimer. Requires FAD as cofactor.

It functions in the pathway secondary metabolite biosynthesis. In terms of biological role, ribosyldihydronicotinamide dehydrogenase-like protein; part of the tra gene cluster that produces terrestric acid. The clavatol biosynthesis cluster cla and the terrestric acid cluster tra are both involved in the production of peniphenones and penilactones. The non-reducing PKS claF is responsible for the formation of clavatol from successive condensations of 3 malonyl-CoA units, presumably with a simple acetyl-CoA starter unit, and 2 methylation steps. The esterase claE probably collaborates with claF by catalyzing the hydrolysis of ACP-bound acyl intermediates to free the ACP from stalled intermediates. The clavatol oxidase claD then converts clavatol to hydroxyclavatol. Spontaneous dehydration of hydroxyclavatol leads to the accumulation of the highly active ortho-quinone methide. On the other hand, the PKS-NRPS hybrid traA is involved in the formation of crustosic acid, with the help of traB and traD. The polyketide synthase module (PKS) of traA is responsible for the synthesis of the polyketide backbone via the condensation of an acetyl-CoA starter unit with 3 malonyl-CoA units. The downstream nonribosomal peptide synthetase (NRPS) module then amidates the carboxyl end of the polyketide with L-malic acid. Because traA lacks a designated enoylreductase (ER) domain, the required activity is provided the enoyl reductase traG. Crustosic acid undergoes decarboxylation and isomerization to the terrestric acid, catalyzed by the 2-oxoglutarate-dependent dioxygenase traH. Both acids are further converted to the 2 gamma-butyrolactones (R)-5-methyltetronic acid and (S)-5-carboxylmethyltetronic acid, with involvement of the cytochrome P450 monooxygenase claJ. Spontaneous addition of the methide to these gamma-butyrolactones leads to peniphenone D and penilactone D, which undergo again stereospecific attacking by methide to give penilactones A and B. The protein is Ribosyldihydronicotinamide dehydrogenase-like protein traD of Penicillium crustosum (Blue mold fungus).